The following is a 47-amino-acid chain: Conotoxin Bu10 (47 aa).

The propeptide occupies 1-22 (DSRGTQLHRALRKATILSVSAR). 3 disulfides stabilise this stretch: cysteine 23/cysteine 37, cysteine 30/cysteine 41, and cysteine 36/cysteine 46. Cysteine 46 bears the Cysteine amide mark.

This sequence belongs to the conotoxin O1 superfamily. As to expression, expressed by the venom duct.

The protein resides in the secreted. This chain is Conotoxin Bu10, found in Conus bullatus (Bubble cone).